Consider the following 147-residue polypeptide: Large ribosomal subunit protein uL15 (147 aa).

The segment at 1–42 (MTIKLHHLRPAPGSKSNKIRVGRGEGGKRGKTAGRGTKGTKA) is disordered.

The protein belongs to the universal ribosomal protein uL15 family. In terms of assembly, part of the 50S ribosomal subunit.

In terms of biological role, binds to the 23S rRNA. This Rhodococcus erythropolis (strain PR4 / NBRC 100887) protein is Large ribosomal subunit protein uL15.